The sequence spans 389 residues: TelA-like protein SH1505 (389 aa).

The protein belongs to the TelA family.

This is TelA-like protein SH1505 from Staphylococcus haemolyticus (strain JCSC1435).